The sequence spans 248 residues: Killer cell lectin-like receptor subfamily I member 2 (248 aa).

Topologically, residues 1-79 are cytoplasmic; sequence MHKKKHIKHG…GIDPWLTTWQ (79 aa). The tract at residues 19-44 is disordered; the sequence is IGTKSPTFQEKQRPSKTDQRSTVWRE. Residues 28–44 are compositionally biased toward basic and acidic residues; sequence EKQRPSKTDQRSTVWRE. Residues 80 to 100 traverse the membrane as a helical; Signal-anchor for type II membrane protein segment; that stretch reads MITVILATLCIILVTKVGFLI. The Extracellular segment spans residues 101-248; the sequence is PSLFSKGEKQ…KKTYICEFNI (148 aa). Intrachain disulfides connect C132/C145, C161/C244, and C223/C236. One can recognise a C-type lectin domain in the interval 139-245; the sequence is FGNNFYCVFR…CSAKKTYICE (107 aa). N197, N214, and N220 each carry an N-linked (GlcNAc...) asparagine glycan.

As to quaternary structure, heterodimer with KLRE1. Expressed in natural killer (NK) cells.

It localises to the cell membrane. Lectin-like receptor for natural killer (NK) cells. Heterodimer formation with KLRE1 mediates NK cell cytolytic activity. The sequence is that of Killer cell lectin-like receptor subfamily I member 2 from Mus musculus (Mouse).